An 89-amino-acid polypeptide reads, in one-letter code: Small ribosomal subunit protein uS15 (89 aa).

A compositionally biased stretch (basic and acidic residues) spans 1-20 (MSITQERKSALIAEHARGKT). Positions 1–24 (MSITQERKSALIAEHARGKTDTGS) are disordered.

Belongs to the universal ribosomal protein uS15 family. In terms of assembly, part of the 30S ribosomal subunit. Forms a bridge to the 50S subunit in the 70S ribosome, contacting the 23S rRNA.

Functionally, one of the primary rRNA binding proteins, it binds directly to 16S rRNA where it helps nucleate assembly of the platform of the 30S subunit by binding and bridging several RNA helices of the 16S rRNA. Forms an intersubunit bridge (bridge B4) with the 23S rRNA of the 50S subunit in the ribosome. The sequence is that of Small ribosomal subunit protein uS15 from Maricaulis maris (strain MCS10) (Caulobacter maris).